A 470-amino-acid polypeptide reads, in one-letter code: Acyltransferase BOA11 (470 aa).

The active-site Proton acceptor is His156.

This sequence belongs to the plant acyltransferase family.

It functions in the pathway polyketide biosynthesis. Acyltransferase; part of the gene cluster B that mediates the biosynthesis of botcinic acid and its botcinin derivatives, acetate-derived polyketides that contribute to virulence when combined with the sesquiterpene botrydial. Botcinic acid and its derivatives have been shown to induce chlorosis and necrosis during host plant infection, but also have antifungal activities. Two polyketide synthases, BOA6 and BOA9, are involved in the biosynthesis of botcinins. BOA6 mediates the formation of the per-methylated tetraketide core by condensation of four units of malonyl-CoA with one unit of acetyl-CoA, which would be methylated in activated methylene groups to yield a bicyclic acid intermediate that could then either be converted to botrylactone derivatives or lose the starter acetate unit through a retro-Claisen type C-C bond cleavage to yield botcinin derivatives. The second polyketide synthase, BOA9, is probably required for the biosynthesis of the tetraketide side chain of botcinins. The methyltransferase (MT) domain within BOA6 is probably responsible for the incorporation of four methyl groups. The trans-enoyl reductase BOA5 might take over the enoyl reductase function of BOA6 that misses an ER domain. The monooxygenases BOA2, BOA3 and BOA4 might be involved in further hydroxylations at C4, C5 and C8, whereas BOA7, close to BOA9, could potentially be involved in the hydroxylation at C4 in the side chain of botcinins. The chain is Acyltransferase BOA11 from Botryotinia fuckeliana (strain B05.10) (Noble rot fungus).